Here is a 256-residue protein sequence, read N- to C-terminus: Hydroxyacylglutathione hydrolase (256 aa).

7 residues coordinate Zn(2+): His-56, His-58, Asp-60, His-61, His-114, Asp-133, and His-171.

It belongs to the metallo-beta-lactamase superfamily. Glyoxalase II family. In terms of assembly, monomer. Zn(2+) is required as a cofactor.

The catalysed reaction is an S-(2-hydroxyacyl)glutathione + H2O = a 2-hydroxy carboxylate + glutathione + H(+). The protein operates within secondary metabolite metabolism; methylglyoxal degradation; (R)-lactate from methylglyoxal: step 2/2. Its function is as follows. Thiolesterase that catalyzes the hydrolysis of S-D-lactoyl-glutathione to form glutathione and D-lactic acid. The chain is Hydroxyacylglutathione hydrolase from Rhodobacter capsulatus (Rhodopseudomonas capsulata).